Reading from the N-terminus, the 117-residue chain is Large ribosomal subunit protein uL18 (117 aa).

Belongs to the universal ribosomal protein uL18 family. In terms of assembly, part of the 50S ribosomal subunit; part of the 5S rRNA/L5/L18/L25 subcomplex. Contacts the 5S and 23S rRNAs.

In terms of biological role, this is one of the proteins that bind and probably mediate the attachment of the 5S RNA into the large ribosomal subunit, where it forms part of the central protuberance. This Pasteurella multocida (strain Pm70) protein is Large ribosomal subunit protein uL18.